The following is a 790-amino-acid chain: Tumor necrosis factor alpha-induced protein 3 (790 aa).

Residue A2 is modified to N-acetylalanine. Residues 58–300 (PQFREIIHKA…LTDPENEMKE (243 aa)) form a TRAF-binding region. The 172-residue stretch at 92–263 (LVALKTNGDG…SHHFVPLVTL (172 aa)) folds into the OTU domain. Residue D100 is part of the active site. Residue C103 is the Nucleophile of the active site. Interaction with ubiquitin regions lie at residues 157 to 159 (LCY), 190 to 192 (SLE), and 224 to 227 (FAPL). H256 functions as the Proton acceptor in the catalytic mechanism. Over residues 357–368 (QENSEQGRREGH) the composition is skewed to basic and acidic residues. Residues 357 to 377 (QENSEQGRREGHAQNPMEPSV) form a disordered region. The segment at 369–775 (AQNPMEPSVP…ACDHFGNAKC (407 aa)) is interaction with TNIP1. Residues 381-416 (SLMDVKCETPNCPFFMSVNTQPLCHECSERRQKNQN) form an A20-type 1 zinc finger. The segment at 386–453 (KCETPNCPFF…EPLAWNPEES (68 aa)) is interaction with RIPK1. Residues C387, C392, C404, and C407 each coordinate Zn(2+). Disordered regions lie at residues 415-434 (QNKL…PGMA) and 447-468 (AWNP…PSPF). Phosphoserine is present on S459. 2 consecutive A20-type zinc fingers follow at residues 472–507 (ETTA…LHAS) and 515–548 (HLDP…AEAS). 8 residues coordinate Zn(2+): C478, C483, C495, C498, C521, C524, C536, and C539. Residues 550-583 (SLSTSLPPSCHQRSKSDPSRLVRSPSPHSCHRAG) form a disordered region. Residue S575 is modified to Phosphoserine. The A20-type 4 zinc finger occupies 601 to 636 (RTGTSKCRKAGCVYFGTPENKGFCTLCFIEYRENKH). The segment at 605–655 (SKCRKAGCVYFGTPENKGFCTLCFIEYRENKHFAAASGKVSPTASRFQNTI) is required for proteasomal degradation of UBE2N and UBE2D3, TRAF6 deubiquitination, and TAX1BP1 interaction with UBE2N. The segment at 606–790 (KCRKAGCVYF…ECFQFKQMYG (185 aa)) is sufficient for inhibitory activity of TNF-induced NF-kappa-B activity. Residues C607, C612, C624, and C627 each contribute to the Zn(2+) site. The residue at position 645 (S645) is a Phosphoserine. The A20-type 5 zinc-finger motif lies at 651-686 (FQNTIPCLGRECGTLGSTMFEGYCQKCFIEAQNQRF). The Zn(2+) site is built by C657, C662, C674, and C677. Residues 689–705 (AKRTEEQLRSSQRRDVP) show a composition bias toward basic and acidic residues. Residues 689–712 (AKRTEEQLRSSQRRDVPRTTQSTS) form a disordered region. Residues 697-790 (RSSQRRDVPR…ECFQFKQMYG (94 aa)) form a required for lysosomal localization and for TRAF2 lysosomal degradation region. 2 A20-type zinc fingers span residues 710 to 745 (STSR…RMGP) and 756 to 790 (DPPK…QMYG). Positions 716, 721, 733, 736, 762, 767, 779, and 782 each coordinate Zn(2+).

This sequence belongs to the peptidase C64 family. As to quaternary structure, homodimer. Interacts with TNIP1, TAX1BP1 and TRAF2. Interacts with RNF11, ITCH and TAX1BP1 only after TNF stimulation; these interaction are transient and they are lost after 1 hour of stimulation with TNF. Interacts with YWHAZ and YWHAH. Interacts with IKBKG; the interaction is induced by TNF stimulation and by polyubiquitin. Interacts with RIPK1. Interacts with UBE2N; the interaction requires TAX1BP1. Interacts with TRAF6; the interaction is inhibited by HTLV-1 protein Tax. Proteolytically cleaved by MALT1 upon TCR stimulation; disrupts NF-kappa-B inhibitory function and results in increased IL-2 production. It is proposed that only a fraction of TNFAIP3 colocalized with TCR and CBM complex is cleaved, leaving the main TNFAIP3 pool intact.

It is found in the cytoplasm. The protein localises to the nucleus. It localises to the lysosome. It catalyses the reaction Thiol-dependent hydrolysis of ester, thioester, amide, peptide and isopeptide bonds formed by the C-terminal Gly of ubiquitin (a 76-residue protein attached to proteins as an intracellular targeting signal).. Ubiquitin-editing enzyme that contains both ubiquitin ligase and deubiquitinase activities. Involved in immune and inflammatory responses signaled by cytokines, such as TNF-alpha and IL-1 beta, or pathogens via Toll-like receptors (TLRs) through terminating NF-kappa-B activity. Essential component of a ubiquitin-editing protein complex, comprising also RNF11, ITCH and TAX1BP1, that ensures the transient nature of inflammatory signaling pathways. In cooperation with TAX1BP1 promotes disassembly of E2-E3 ubiquitin protein ligase complexes in IL-1R and TNFR-1 pathways; affected are at least E3 ligases TRAF6, TRAF2 and BIRC2, and E2 ubiquitin-conjugating enzymes UBE2N and UBE2D3. In cooperation with TAX1BP1 promotes ubiquitination of UBE2N and proteasomal degradation of UBE2N and UBE2D3. Upon TNF stimulation, deubiquitinates 'Lys-63'-polyubiquitin chains on RIPK1 and catalyzes the formation of 'Lys-48'-polyubiquitin chains. This leads to RIPK1 proteasomal degradation and consequently termination of the TNF- or LPS-mediated activation of NF-kappa-B. Deubiquitinates TRAF6 probably acting on 'Lys-63'-linked polyubiquitin. Upon T-cell receptor (TCR)-mediated T-cell activation, deubiquitinates 'Lys-63'-polyubiquitin chains on MALT1 thereby mediating disassociation of the CBM (CARD11:BCL10:MALT1) and IKK complexes and preventing sustained IKK activation. Deubiquitinates NEMO/IKBKG; the function is facilitated by TNIP1 and leads to inhibition of NF-kappa-B activation. Upon stimulation by bacterial peptidoglycans, probably deubiquitinates RIPK2. Can also inhibit I-kappa-B-kinase (IKK) through a non-catalytic mechanism which involves polyubiquitin; polyubiquitin promotes association with IKBKG and prevents IKK MAP3K7-mediated phosphorylation. Targets TRAF2 for lysosomal degradation. In vitro able to deubiquitinate 'Lys-11'-, 'Lys-48'- and 'Lys-63' polyubiquitin chains. Inhibitor of programmed cell death. Has a role in the function of the lymphoid system. Required for LPS-induced production of pro-inflammatory cytokines and IFN beta in LPS-tolerized macrophages. The protein is Tumor necrosis factor alpha-induced protein 3 (TNFAIP3) of Homo sapiens (Human).